The chain runs to 166 residues: Polyadenylate-binding protein 2 (166 aa).

Positions 55-132 (QSVYVGNVDY…RPLKVTPKRT (78 aa)) constitute an RRM domain. Positions 129–166 (PKRTNVPGMSRGRGRGRGRGRGRGRGGYRGRARGFAPY) are disordered. Over residues 140–160 (GRGRGRGRGRGRGRGGYRGRA) the composition is skewed to basic residues.

The protein resides in the nucleus. This Schizosaccharomyces pombe (strain 972 / ATCC 24843) (Fission yeast) protein is Polyadenylate-binding protein 2 (pab2).